A 246-amino-acid chain; its full sequence is Transmembrane and ubiquitin-like domain-containing protein 1 (246 aa).

Residues 2-30 (ALIEGVGDEVTILFSALACLLVLALAWVS) form a required to release iHOPS from membranes region. Residues 11–31 (VTILFSALACLLVLALAWVST) form a helical membrane-spanning segment. Residues 35 to 102 (EGADPLPQPS…PPPPDSPQEP (68 aa)) form a disordered region. Residues 40–50 (LPQPSGTPTPT) are compositionally biased toward pro residues. A phosphothreonine mark is found at Thr-71 and Thr-92. Residues Ser-98 and Ser-127 each carry the phosphoserine modification. The Ubiquitin-like domain occupies 103–176 (LVLRLKFLND…LHCHVSTRVG (74 aa)). Transmembrane regions (helical) follow at residues 195-215 (VGSL…YCQI) and 221-241 (FPLT…LLAF).

Interacts with EEF1A1, GRIA2, GRIP1, CAMLG, TUBG1. Interacts with NPM1 and CDKN2A; TMUB1 can enhance interaction between NPM1 and CDKN2A and is proposed to bridge the proteins; proposed to be mediated by iHOPS. Interacts with ERLIN2 and AMFR; TMUB1 promotes the interaction of ERLIN2 with AMFR. In terms of processing, processed by regulated intramembrane proteolysis (RIP) in the N-terminus to release iHOPS from membranes.

It localises to the membrane. The protein localises to the postsynaptic cell membrane. The protein resides in the recycling endosome. Its subcellular location is the cytoplasm. It is found in the nucleus. It localises to the nucleolus. The protein localises to the cytoskeleton. The protein resides in the microtubule organizing center. Its subcellular location is the centrosome. Functionally, involved in sterol-regulated ubiquitination and degradation of HMG-CoA reductase HMGCR. Involved in positive regulation of AMPA-selective glutamate receptor GRIA2 recycling to the cell surface. Acts as negative regulator of hepatocyte growth during regeneration. In terms of biological role, may contribute to the regulation of translation during cell-cycle progression. May contribute to the regulation of cell proliferation. May be involved in centrosome assembly. Modulates stabilization and nucleolar localization of tumor suppressor CDKN2A and enhances association between CDKN2A and NPM1. This chain is Transmembrane and ubiquitin-like domain-containing protein 1 (TMUB1), found in Bos taurus (Bovine).